Here is an 800-residue protein sequence, read N- to C-terminus: Phenylalanine--tRNA ligase beta subunit (800 aa).

In terms of domain architecture, tRNA-binding spans 39 to 154 (TKDIKKLVVG…EAVKPGTDAL (116 aa)). A B5 domain is found at 408–483 (SFVTPIKITA…RIYGYDDIPS (76 aa)). Positions 461, 467, 470, and 471 each coordinate Mg(2+). One can recognise an FDX-ACB domain in the interval 708–800 (PRFPGVTRDI…ALKKHGAIIR (93 aa)).

The protein belongs to the phenylalanyl-tRNA synthetase beta subunit family. Type 1 subfamily. As to quaternary structure, tetramer of two alpha and two beta subunits. Mg(2+) serves as cofactor.

The protein localises to the cytoplasm. It catalyses the reaction tRNA(Phe) + L-phenylalanine + ATP = L-phenylalanyl-tRNA(Phe) + AMP + diphosphate + H(+). The polypeptide is Phenylalanine--tRNA ligase beta subunit (Staphylococcus epidermidis (strain ATCC 35984 / DSM 28319 / BCRC 17069 / CCUG 31568 / BM 3577 / RP62A)).